A 37-amino-acid polypeptide reads, in one-letter code: Large ribosomal subunit protein bL36c (37 aa).

This sequence belongs to the bacterial ribosomal protein bL36 family.

The protein localises to the plastid. In Cuscuta reflexa (Southern Asian dodder), this protein is Large ribosomal subunit protein bL36c.